Reading from the N-terminus, the 659-residue chain is A-type ATP synthase subunit I (659 aa).

Helical transmembrane passes span 376 to 396, 415 to 435, 460 to 480, 489 to 509, 518 to 538, 542 to 562, 568 to 588, and 590 to 610; these read FFFG…IISA, IMLW…SYCG, MIAL…GFIV, GAIF…LFAL, LIVK…EVLA, MAVL…LSYA, ALAT…IWGI, and IASV…GHIF.

It belongs to the V-ATPase 116 kDa subunit family. Has multiple subunits with at least A(3), B(3), C, D, E, F, H, I and proteolipid K(x).

It localises to the cell membrane. Functionally, component of the A-type ATP synthase that produces ATP from ADP in the presence of a proton gradient across the membrane. This chain is A-type ATP synthase subunit I, found in Pyrococcus horikoshii (strain ATCC 700860 / DSM 12428 / JCM 9974 / NBRC 100139 / OT-3).